Here is a 676-residue protein sequence, read N- to C-terminus: Methionine--tRNA ligase (676 aa).

The short motif at 15-25 (PYANGPIHLGH) is the 'HIGH' region element. The Zn(2+) site is built by Cys-146, Cys-149, Cys-159, and Cys-162. The 'KMSKS' region signature appears at 332-336 (KMSKS). Lys-335 is a binding site for ATP. The region spanning 575–676 (DFAKIDLRIA…EGAQPGMRVK (102 aa)) is the tRNA-binding domain.

Belongs to the class-I aminoacyl-tRNA synthetase family. MetG type 1 subfamily. As to quaternary structure, homodimer. Zn(2+) is required as a cofactor.

It localises to the cytoplasm. The catalysed reaction is tRNA(Met) + L-methionine + ATP = L-methionyl-tRNA(Met) + AMP + diphosphate. In terms of biological role, is required not only for elongation of protein synthesis but also for the initiation of all mRNA translation through initiator tRNA(fMet) aminoacylation. In Shewanella sp. (strain MR-7), this protein is Methionine--tRNA ligase.